A 205-amino-acid chain; its full sequence is uncharacterized protein (205 aa).

This is an uncharacterized protein from Bacillus subtilis (strain 168).